Reading from the N-terminus, the 174-residue chain is Large ribosomal subunit protein uL10 (174 aa).

It belongs to the universal ribosomal protein uL10 family. Part of the ribosomal stalk of the 50S ribosomal subunit. The N-terminus interacts with L11 and the large rRNA to form the base of the stalk. The C-terminus forms an elongated spine to which L12 dimers bind in a sequential fashion forming a multimeric L10(L12)X complex.

In terms of biological role, forms part of the ribosomal stalk, playing a central role in the interaction of the ribosome with GTP-bound translation factors. The protein is Large ribosomal subunit protein uL10 of Trichlorobacter lovleyi (strain ATCC BAA-1151 / DSM 17278 / SZ) (Geobacter lovleyi).